Reading from the N-terminus, the 383-residue chain is Embryonic pepsinogen (383 aa).

The N-terminal stretch at 1-16 (MRSLALLCAVLALSDG) is a signal peptide. Residues 76-380 (YYGTISIGTP…DRANNRVGLA (305 aa)) form the Peptidase A1 domain. Asp94 is a catalytic residue. A disulfide bridge connects residues Cys107 and Cys112. N-linked (GlcNAc...) asparagine glycosylation is found at Asn132 and Asn204. A disulfide bridge connects residues Cys267 and Cys271. The active site involves Asp276. Asn309 carries an N-linked (GlcNAc...) asparagine glycan. An intrachain disulfide couples Cys310 to Cys344. Residue Asn350 is glycosylated (N-linked (GlcNAc...) asparagine).

The protein belongs to the peptidase A1 family.

The polypeptide is Embryonic pepsinogen (Gallus gallus (Chicken)).